A 249-amino-acid polypeptide reads, in one-letter code: Derlin-2.1 (249 aa).

Topologically, residues methionine 1 to threonine 21 are cytoplasmic. A helical transmembrane segment spans residues alanine 22–leucine 42. Residues asparagine 43–phenylalanine 96 lie on the Lumenal side of the membrane. The helical transmembrane segment at phenylalanine 97–isoleucine 117 threads the bilayer. Residues proline 118 to glutamate 122 lie on the Cytoplasmic side of the membrane. Residues threonine 123–serine 143 form a helical membrane-spanning segment. The Lumenal segment spans residues lysine 144–serine 152. A helical membrane pass occupies residues phenylalanine 153 to isoleucine 173. Topologically, residues leucine 174–glutamine 249 are cytoplasmic.

The protein belongs to the derlin family. As to expression, expressed in roots, stalks, leaves, embryo and endosperm.

It is found in the endoplasmic reticulum membrane. Its function is as follows. May be involved in the degradation process of specific misfolded endoplasmic reticulum (ER) luminal proteins. The chain is Derlin-2.1 (DER2.1) from Zea mays (Maize).